The primary structure comprises 413 residues: Phosphopentomutase (413 aa).

Mn(2+)-binding residues include Asp11, Asp306, His311, Asp347, His348, and His359.

This sequence belongs to the phosphopentomutase family. The cofactor is Mn(2+).

The protein resides in the cytoplasm. The catalysed reaction is 2-deoxy-alpha-D-ribose 1-phosphate = 2-deoxy-D-ribose 5-phosphate. It carries out the reaction alpha-D-ribose 1-phosphate = D-ribose 5-phosphate. It functions in the pathway carbohydrate degradation; 2-deoxy-D-ribose 1-phosphate degradation; D-glyceraldehyde 3-phosphate and acetaldehyde from 2-deoxy-alpha-D-ribose 1-phosphate: step 1/2. Isomerase that catalyzes the conversion of deoxy-ribose 1-phosphate (dRib-1-P) and ribose 1-phosphate (Rib-1-P) to deoxy-ribose 5-phosphate (dRib-5-P) and ribose 5-phosphate (Rib-5-P), respectively. The chain is Phosphopentomutase from Helicobacter pylori (strain ATCC 700392 / 26695) (Campylobacter pylori).